The primary structure comprises 326 residues: Protein ORF5 in retron Ec67 (326 aa).

Residues 1-24 (MGKSKKNRAAATNQLKHKSQTSAE) form a disordered region. Over residues 10-24 (AATNQLKHKSQTSAE) the composition is skewed to polar residues.

This sequence belongs to the phage portal family. PBSX subfamily.

The sequence is that of Protein ORF5 in retron Ec67 from Escherichia coli.